The following is an 829-amino-acid chain: Periplasmic nitrate reductase (829 aa).

Residues 1–30 constitute a signal peptide (tat-type signal); sequence MKMTRRAFVKANAAASAAAVAGITLPASAA. The 57-residue stretch at 41–97 folds into the 4Fe-4S Mo/W bis-MGD-type domain; it reads ITWDKAPCRFCGTGCSVLVGTQNGKVVATQGDPEAPVNKGLNCIKGYFLSKIMYGQD. [4Fe-4S] cluster is bound by residues Cys-48, Cys-51, Cys-55, and Cys-83. Mo-bis(molybdopterin guanine dinucleotide)-binding positions include Lys-85, Gln-152, Asn-177, Cys-181, 214–221, 245–249, 264–266, Met-374, Gln-378, Asn-484, 510–511, Lys-533, Asp-560, and 718–727; these read WGSNMAEM, STYYH, QSD, SD, and TGRVLEHWHT. Substrate is bound at residue Phe-794. Positions 802 and 819 each coordinate Mo-bis(molybdopterin guanine dinucleotide).

Belongs to the prokaryotic molybdopterin-containing oxidoreductase family. NasA/NapA/NarB subfamily. Component of the periplasmic nitrate reductase NapAB complex composed of NapA and NapB. Requires [4Fe-4S] cluster as cofactor. It depends on Mo-bis(molybdopterin guanine dinucleotide) as a cofactor. In terms of processing, predicted to be exported by the Tat system. The position of the signal peptide cleavage has not been experimentally proven.

Its subcellular location is the periplasm. It carries out the reaction 2 Fe(II)-[cytochrome] + nitrate + 2 H(+) = 2 Fe(III)-[cytochrome] + nitrite + H2O. Its function is as follows. Catalytic subunit of the periplasmic nitrate reductase complex NapAB. Receives electrons from NapB and catalyzes the reduction of nitrate to nitrite. The sequence is that of Periplasmic nitrate reductase from Vibrio vulnificus (strain YJ016).